A 721-amino-acid polypeptide reads, in one-letter code: Ribonucleoside-diphosphate reductase subunit alpha (721 aa).

Residues Thr159, 175–176 (SC), Gly204, 384–388 (NLCSE), and 589–593 (PTGSI) contribute to the substrate site. A disulfide bridge links Cys176 with Cys413. Asn384 functions as the Proton acceptor in the catalytic mechanism. Cys386 functions as the Cysteine radical intermediate in the catalytic mechanism. Glu388 (proton acceptor) is an active-site residue.

The protein belongs to the ribonucleoside diphosphate reductase large chain family. In terms of assembly, tetramer of two alpha and two beta subunits.

The enzyme catalyses a 2'-deoxyribonucleoside 5'-diphosphate + [thioredoxin]-disulfide + H2O = a ribonucleoside 5'-diphosphate + [thioredoxin]-dithiol. Its activity is regulated as follows. Under complex allosteric control mediated by deoxynucleoside triphosphates and ATP binding. The type of nucleotide bound at the specificity site determines substrate preference. It seems probable that ATP makes the enzyme reduce CDP and UDP, dGTP favors ADP reduction and dTTP favors GDP reduction. In terms of biological role, provides the precursors necessary for DNA synthesis. Catalyzes the biosynthesis of deoxyribonucleotides from the corresponding ribonucleotides. In Mycoplasma pneumoniae (strain ATCC 29342 / M129 / Subtype 1) (Mycoplasmoides pneumoniae), this protein is Ribonucleoside-diphosphate reductase subunit alpha (nrdE).